The sequence spans 98 residues: Citrate lyase acyl carrier protein (98 aa).

Ser-14 carries the O-(phosphoribosyl dephospho-coenzyme A)serine modification.

It belongs to the CitD family. In terms of assembly, oligomer with a subunit composition of (alpha,beta,gamma)6.

The protein resides in the cytoplasm. Covalent carrier of the coenzyme of citrate lyase. This Vibrio cholerae serotype O1 (strain ATCC 39315 / El Tor Inaba N16961) protein is Citrate lyase acyl carrier protein.